We begin with the raw amino-acid sequence, 257 residues long: MRHTPRKRFGQHFLVDTSVIAEIIHIIHPVPGDRMIEIGPGLGALTKPLLNVLDELQVIEIDRDIVDYLSRTYPGKLVIHNIDALKFDFSELGEGLRIIGNLPYNISTPLLFHLSRFSSLITDMYFMLQLEVVERMVALPSTPDYGRLSIMLQNRFEMEQMLVVPAESFDPPPRVQSAIVCMRPKAEPTIPLKHERLFAELVSAAFSQRRKTLRNTLRHYLTADDFERLEIDSGLRAENLSLAQYAAIVRQVYEDRQ.

S-adenosyl-L-methionine-binding residues include His-12, Leu-14, Gly-39, Glu-60, Asp-83, and Asn-101.

This sequence belongs to the class I-like SAM-binding methyltransferase superfamily. rRNA adenine N(6)-methyltransferase family. RsmA subfamily.

Its subcellular location is the cytoplasm. The catalysed reaction is adenosine(1518)/adenosine(1519) in 16S rRNA + 4 S-adenosyl-L-methionine = N(6)-dimethyladenosine(1518)/N(6)-dimethyladenosine(1519) in 16S rRNA + 4 S-adenosyl-L-homocysteine + 4 H(+). Functionally, specifically dimethylates two adjacent adenosines (A1518 and A1519) in the loop of a conserved hairpin near the 3'-end of 16S rRNA in the 30S particle. May play a critical role in biogenesis of 30S subunits. This is Ribosomal RNA small subunit methyltransferase A from Nitrosomonas europaea (strain ATCC 19718 / CIP 103999 / KCTC 2705 / NBRC 14298).